The sequence spans 60 residues: Potassium channel toxin-like Tx677 (60 aa).

The signal sequence occupies residues 1–22 (MKISALVMITLLICSMMILCQG). Intrachain disulfides connect Cys30-Cys51, Cys36-Cys56, and Cys40-Cys58.

It belongs to the short scorpion toxin superfamily. Potassium channel inhibitor family. As to expression, expressed by the venom gland.

Its subcellular location is the secreted. In terms of biological role, weakly inhibits Kv11.1/KCNH2/ERG1, Kv1.2/KCNA2 and Kv1.3/KCNA3 voltage-gated potassium channels. In Buthus israelis (Israeli scorpion), this protein is Potassium channel toxin-like Tx677.